The chain runs to 376 residues: Chaperone protein DnaJ (376 aa).

The J domain maps to 4–68 (DYYDILGVDR…DTRSRYDQFG (65 aa)). A CR-type zinc finger spans residues 135 to 217 (GGEKEIRIPH…CNGAGRRQVT (83 aa)). 8 residues coordinate Zn(2+): Cys-148, Cys-151, Cys-165, Cys-168, Cys-191, Cys-194, Cys-205, and Cys-208. CXXCXGXG motif repeat units lie at residues 148 to 155 (CQVCKGDG), 165 to 172 (CSTCNGQG), 191 to 198 (CPACNGQG), and 205 to 212 (CEVCNGAG).

Belongs to the DnaJ family. Homodimer. Zn(2+) serves as cofactor.

It localises to the cytoplasm. Its function is as follows. Participates actively in the response to hyperosmotic and heat shock by preventing the aggregation of stress-denatured proteins and by disaggregating proteins, also in an autonomous, DnaK-independent fashion. Unfolded proteins bind initially to DnaJ; upon interaction with the DnaJ-bound protein, DnaK hydrolyzes its bound ATP, resulting in the formation of a stable complex. GrpE releases ADP from DnaK; ATP binding to DnaK triggers the release of the substrate protein, thus completing the reaction cycle. Several rounds of ATP-dependent interactions between DnaJ, DnaK and GrpE are required for fully efficient folding. Also involved, together with DnaK and GrpE, in the DNA replication of plasmids through activation of initiation proteins. In Crocosphaera subtropica (strain ATCC 51142 / BH68) (Cyanothece sp. (strain ATCC 51142)), this protein is Chaperone protein DnaJ.